The following is an 891-amino-acid chain: Alanine--tRNA ligase (891 aa).

Histidine 576, histidine 580, cysteine 684, and histidine 688 together coordinate Zn(2+).

This sequence belongs to the class-II aminoacyl-tRNA synthetase family. Requires Zn(2+) as cofactor.

Its subcellular location is the cytoplasm. The enzyme catalyses tRNA(Ala) + L-alanine + ATP = L-alanyl-tRNA(Ala) + AMP + diphosphate. Catalyzes the attachment of alanine to tRNA(Ala) in a two-step reaction: alanine is first activated by ATP to form Ala-AMP and then transferred to the acceptor end of tRNA(Ala). Also edits incorrectly charged Ser-tRNA(Ala) and Gly-tRNA(Ala) via its editing domain. This Orientia tsutsugamushi (strain Boryong) (Rickettsia tsutsugamushi) protein is Alanine--tRNA ligase.